A 123-amino-acid polypeptide reads, in one-letter code: Dihydroneopterin triphosphate 2'-epimerase (123 aa).

It belongs to the DHNA family. Homooctamer. Dimer of tetramers.

The catalysed reaction is 7,8-dihydroneopterin 3'-triphosphate = 7,8-dihydromonapterin 3'-triphosphate. In terms of biological role, catalyzes the epimerization of carbon 2' of the side chain of 7,8-dihydroneopterin triphosphate (H2NTP) to form 7,8-dihydromonapterin triphosphate (H2MTP). Is required for tetrahydromonapterin biosynthesis. The sequence is that of Dihydroneopterin triphosphate 2'-epimerase from Pseudomonas aeruginosa (strain ATCC 15692 / DSM 22644 / CIP 104116 / JCM 14847 / LMG 12228 / 1C / PRS 101 / PAO1).